The following is a 110-amino-acid chain: UPF0122 protein GK1195 (110 aa).

Belongs to the UPF0122 family.

In terms of biological role, might take part in the signal recognition particle (SRP) pathway. This is inferred from the conservation of its genetic proximity to ftsY/ffh. May be a regulatory protein. The chain is UPF0122 protein GK1195 from Geobacillus kaustophilus (strain HTA426).